The chain runs to 241 residues: Phycocyanobilin:ferredoxin oxidoreductase (241 aa).

This sequence belongs to the HY2 family.

The enzyme catalyses (2R,3Z)-phycocyanobilin + 4 oxidized [2Fe-2S]-[ferredoxin] = biliverdin IXalpha + 4 reduced [2Fe-2S]-[ferredoxin] + 4 H(+). Functionally, catalyzes the four-electron reduction of biliverdin IX-alpha (2-electron reduction at both the A and D rings); the reaction proceeds via an isolatable 2-electron intermediate, 181,182-dihydrobiliverdin. This is Phycocyanobilin:ferredoxin oxidoreductase from Prochlorococcus marinus (strain MIT 9312).